Reading from the N-terminus, the 195-residue chain is Molybdenum cofactor guanylyltransferase (195 aa).

Residues 12–14 (LAG), K25, N53, D70, and D100 each bind GTP. Mg(2+) is bound at residue D100.

This sequence belongs to the MobA family. As to quaternary structure, monomer. Requires Mg(2+) as cofactor.

It is found in the cytoplasm. It carries out the reaction Mo-molybdopterin + GTP + H(+) = Mo-molybdopterin guanine dinucleotide + diphosphate. Transfers a GMP moiety from GTP to Mo-molybdopterin (Mo-MPT) cofactor (Moco or molybdenum cofactor) to form Mo-molybdopterin guanine dinucleotide (Mo-MGD) cofactor. This Vibrio parahaemolyticus serotype O3:K6 (strain RIMD 2210633) protein is Molybdenum cofactor guanylyltransferase.